A 405-amino-acid chain; its full sequence is NADH-quinone oxidoreductase subunit D (405 aa).

This sequence belongs to the complex I 49 kDa subunit family. In terms of assembly, NDH-1 is composed of 14 different subunits. Subunits NuoB, C, D, E, F, and G constitute the peripheral sector of the complex.

It is found in the cell inner membrane. The catalysed reaction is a quinone + NADH + 5 H(+)(in) = a quinol + NAD(+) + 4 H(+)(out). NDH-1 shuttles electrons from NADH, via FMN and iron-sulfur (Fe-S) centers, to quinones in the respiratory chain. The immediate electron acceptor for the enzyme in this species is believed to be ubiquinone. Couples the redox reaction to proton translocation (for every two electrons transferred, four hydrogen ions are translocated across the cytoplasmic membrane), and thus conserves the redox energy in a proton gradient. This chain is NADH-quinone oxidoreductase subunit D, found in Afipia carboxidovorans (strain ATCC 49405 / DSM 1227 / KCTC 32145 / OM5) (Oligotropha carboxidovorans).